The following is a 360-amino-acid chain: S-adenosylmethionine:tRNA ribosyltransferase-isomerase (360 aa).

It belongs to the QueA family. In terms of assembly, monomer.

It localises to the cytoplasm. It catalyses the reaction 7-aminomethyl-7-carbaguanosine(34) in tRNA + S-adenosyl-L-methionine = epoxyqueuosine(34) in tRNA + adenine + L-methionine + 2 H(+). It functions in the pathway tRNA modification; tRNA-queuosine biosynthesis. Functionally, transfers and isomerizes the ribose moiety from AdoMet to the 7-aminomethyl group of 7-deazaguanine (preQ1-tRNA) to give epoxyqueuosine (oQ-tRNA). The polypeptide is S-adenosylmethionine:tRNA ribosyltransferase-isomerase (Burkholderia mallei (strain NCTC 10247)).